A 535-amino-acid chain; its full sequence is Aklavinone 12-hydroxylase RdmE (535 aa).

Residues leucine 15, glycine 16, glutamate 35, glutamine 119, and leucine 143 each coordinate FAD. Catalysis depends on tyrosine 224, which acts as the Proton acceptor. Aspartate 308 contributes to the FAD binding site. Residue glycine 317 coordinates aklavinone.

Belongs to the PheA/TfdB FAD monooxygenase family. As to quaternary structure, monomer. FAD is required as a cofactor.

It catalyses the reaction aklavinone + NADPH + O2 + H(+) = epsilon-rhodomycinone + NADP(+) + H2O. It participates in antibiotic biosynthesis; daunorubicin biosynthesis. The protein operates within antibiotic biosynthesis; carminomycin biosynthesis. Its pathway is antibiotic biosynthesis; rhodomycin biosynthesis. Its activity is regulated as follows. Inhibited by phenylglyoxal and 2,3-butanedione. NADP provides a partial protection against inhibition by phenylglyoxal. Increasing the methanol concentration in the assay causes inhibition of the enzyme. Functionally, involved in the biosynthesis of the anthracyclines carminomycin, rhodomycin and daunorubicin (daunomycin) which are aromatic polyketide antibiotics that exhibit high cytotoxicity and are widely applied in the chemotherapy of a variety of cancers. Catalyzes the incorporation of a hydroxyl group at position C-11 of aklavinone, resulting in epsilon-rhodomycinone. It cannot accept substrates glycosylated at position C-7 and is specific for the C-9R configuration of anthracyclines. It can use both NAD or NADP but it is slowly inactivated in the presence of NADH. The protein is Aklavinone 12-hydroxylase RdmE (rdmE) of Streptomyces purpurascens.